The following is a 329-amino-acid chain: NADH-quinone oxidoreductase subunit H (329 aa).

9 consecutive transmembrane segments (helical) span residues 9–29, 42–62, 75–95, 117–137, 154–174, 188–208, 238–258, 260–280, and 309–329; these read LIKILILVAVFSALGGFATYI, GPCYVGPFGLLQVAADGIKLF, FIFTLAPIIAMVSAFVSMAPI, IGFLFFLAVGAAGIYAPILAG, IQLLSFEVVSTLTILAPLMVV, GGFLDWLVFKQPLAFVLFLIA, LKWGMFFLAEYAHLFAFSFVI, IVFFGGFNAWGFIPGGLAILI, and WKIMLPLALLNIVLTGIIILI.

Belongs to the complex I subunit 1 family. As to quaternary structure, NDH-1 is composed of 14 different subunits. Subunits NuoA, H, J, K, L, M, N constitute the membrane sector of the complex.

Its subcellular location is the cell inner membrane. It catalyses the reaction a quinone + NADH + 5 H(+)(in) = a quinol + NAD(+) + 4 H(+)(out). Functionally, NDH-1 shuttles electrons from NADH, via FMN and iron-sulfur (Fe-S) centers, to quinones in the respiratory chain. The immediate electron acceptor for the enzyme in this species is believed to be ubiquinone. Couples the redox reaction to proton translocation (for every two electrons transferred, four hydrogen ions are translocated across the cytoplasmic membrane), and thus conserves the redox energy in a proton gradient. This subunit may bind ubiquinone. This is NADH-quinone oxidoreductase subunit H from Helicobacter pylori (strain G27).